A 327-amino-acid polypeptide reads, in one-letter code: MGHAARGKVGVLLLNLGTPDAPTASAVRRYLAEFLSDPRVVEIPKLLWMLILYGIVLRVRPAKSAALYQKVWTEAGSPLMDISLRQTAKLSDKLTADGHQVSVHLAMRYGNPSVASTLREMHKQGIDKLVVLPLYPQYAAPTTGSAFDAIAKELSQWRYLPSLHFINTYHDNPDFIAALVNSIRDDFDKHGKPQKLVLSYHGMPERNLHLGDPYYCFCMKTTRLVAEQLGLSKDEFAITFQSRFGKAKWLQPYTDATMAALPSQGVRDVAIVCPAFSADCLETLEEIVGENGHIFTHAGGEKFRYIPALNDNDDHIAMMANLVKPYL.

2 residues coordinate Fe cation: H201 and E282.

This sequence belongs to the ferrochelatase family.

Its subcellular location is the cytoplasm. It catalyses the reaction heme b + 2 H(+) = protoporphyrin IX + Fe(2+). It functions in the pathway porphyrin-containing compound metabolism; protoheme biosynthesis; protoheme from protoporphyrin-IX: step 1/1. Catalyzes the ferrous insertion into protoporphyrin IX. This Shewanella oneidensis (strain ATCC 700550 / JCM 31522 / CIP 106686 / LMG 19005 / NCIMB 14063 / MR-1) protein is Ferrochelatase 2.